The sequence spans 88 residues: Putative membrane protein insertion efficiency factor (88 aa).

Residues 68–88 are disordered; sequence VPPPNSDTRARGEADARSHRL. Over residues 75–88 the composition is skewed to basic and acidic residues; it reads TRARGEADARSHRL.

Belongs to the UPF0161 family.

It localises to the cell inner membrane. Its function is as follows. Could be involved in insertion of integral membrane proteins into the membrane. The sequence is that of Putative membrane protein insertion efficiency factor from Burkholderia cenocepacia (strain ATCC BAA-245 / DSM 16553 / LMG 16656 / NCTC 13227 / J2315 / CF5610) (Burkholderia cepacia (strain J2315)).